A 456-amino-acid polypeptide reads, in one-letter code: G-protein coupled receptor 39 (456 aa).

Over 1–34 the chain is Extracellular; it reads MASSSGSNHICSRVIDHSHVPEFEVATWIKITLI. Cystine bridges form between Cys-11–Cys-191 and Cys-108–Cys-210. Residues His-17 and His-19 each coordinate Zn(2+). The helical transmembrane segment at 35–55 threads the bilayer; the sequence is LVYLIIFVVGILGNSVTIRVT. Topologically, residues 56–69 are cytoplasmic; sequence QVLQKKGYLQKEVT. The chain crosses the membrane as a helical span at residues 70 to 89; it reads DHMVSLACSDILVFLIGMPM. At 90 to 109 the chain is on the extracellular side; that stretch reads EFYSIIWNPLTTPSYALSCK. The helical transmembrane segment at 110–131 threads the bilayer; that stretch reads LHTFLFETCSYATLLHVLTLSF. At 132 to 151 the chain is on the cytoplasmic side; it reads ERYIAICHPFKYKAVSGPRQ. The helical transmembrane segment at 152–172 threads the bilayer; the sequence is VKLLIGFVWVTSALVALPLLF. Residues 173-217 lie on the Extracellular side of the membrane; that stretch reads AMGIEYPLVNVPTHKGLNCNLSRTRHHDEPGNSNMSICTNLSNRW. Asn-192 and Asn-206 each carry an N-linked (GlcNAc...) asparagine glycan. Residues 218–242 traverse the membrane as a helical segment; the sequence is EVFQSSIFGAFAVYLVVLASVAFMC. Over 243–283 the chain is Cytoplasmic; that stretch reads WNMMKVLMKSKQGTLAGTGPQLQLRKSESEESRTARRQTII. Residues 284–305 traverse the membrane as a helical segment; sequence FLRLIVVTLAVCWMPNQIRRIM. The Extracellular segment spans residues 306-323; sequence AAAKPKHDWTRTYFRAYM. The helical transmembrane segment at 324 to 344 threads the bilayer; sequence ILLPFSDTFFYLSSVVNPLLY. Residues 345-456 lie on the Cytoplasmic side of the membrane; the sequence is NVSSQQFRKV…TENSLQEQEV (112 aa). Position 397 is a phosphoserine (Ser-397). Residues 415–456 are disordered; that stretch reads FQTEAKPGEAKPQPLSPESPQTGSETKPAGSTTENSLQEQEV. Residues 430-456 are compositionally biased toward polar residues; it reads SPESPQTGSETKPAGSTTENSLQEQEV.

It belongs to the G-protein coupled receptor 1 family. In terms of assembly, interacts with HTR1A. Interacts with GALR1. In terms of tissue distribution, expression is detected in septumamygdala, parietal cells, enterocytes, neurons and pancreas, in peripheral organs such as the duodenum and kidney but not in the pituitary and hypothalamus.

It is found in the cell membrane. In terms of biological role, zinc-sensing receptor that can sense changes in extracellular Zn(2+), mediate Zn(2+) signal transmission, and participates in the regulation of numerous physiological processes including glucose homeostasis regulation, gastrointestinal mobility, hormone secretion and cell death. Activation by Zn(2+) in keratinocytes increases the intracellular concentration of Ca(2+) and activates the ERK/MAPK and PI3K/AKT signaling pathways leading to epithelial repair. Plays an essential role in normal wound healing by inducing the production of cytokines including the major inflammatory cytokine IL6 via the PKC/MAPK/CEBPB pathway. Regulates adipose tissue metabolism, especially lipolysis, and regulates the function of lipases, such as hormone-sensitive lipase and adipose triglyceride lipase. Plays a role in the inhibition of cell death and protects against oxidative, endoplasmic reticulum and mitochondrial stress by inducing secretion of the cytoprotective pigment epithelium-derived growth factor (PEDF) and probably other protective transcripts in a GNA13/RHOA/SRE-dependent manner. Forms dynamic heteroreceptor complexes with HTR1A and GALR1 depending on cell type or specific physiological states, resulting in signaling diversity: HTR1A-GPR39 shows additive increase in signaling along the serum response element (SRE) and NF-kappa-B pathways while GALR1 acts as an antagonist blocking SRE. This is G-protein coupled receptor 39 (Gpr39) from Mus musculus (Mouse).